We begin with the raw amino-acid sequence, 659 residues long: Alpha-galactosidase D (659 aa).

The first 20 residues, 1-20 (MRALVPMVVAATALASPAPA), serve as a signal peptide directing secretion. N-linked (GlcNAc...) asparagine glycans are attached at residues Asn-48, Asn-86, and Asn-130. Cys-125 and Cys-158 are oxidised to a cystine. Asp-156 acts as the Nucleophile in catalysis. Asn-183 carries an N-linked (GlcNAc...) asparagine glycan. 201-205 (EWGID) lines the substrate pocket. Asp-223 (proton donor) is an active-site residue. 5 N-linked (GlcNAc...) asparagine glycosylation sites follow: Asn-438, Asn-450, Asn-484, Asn-551, and Asn-583.

It belongs to the glycosyl hydrolase 27 family.

It is found in the secreted. It carries out the reaction Hydrolysis of terminal, non-reducing alpha-D-galactose residues in alpha-D-galactosides, including galactose oligosaccharides, galactomannans and galactolipids.. Hydrolyzes a variety of simple alpha-D-galactoside as well as more complex molecules such as oligosaccharides and polysaccharides. Active on paranitrophenyl-alpha-galactoside but not on raffinose, locust bean gum and gum guar. This is Alpha-galactosidase D (aglD) from Emericella nidulans (strain FGSC A4 / ATCC 38163 / CBS 112.46 / NRRL 194 / M139) (Aspergillus nidulans).